The following is a 186-amino-acid chain: Adenylate kinase (186 aa).

10 to 15 (GVGKGT) is an ATP binding site. The segment at 30-59 (STGDIFRYNIKNKTELGLEAMSYTDKGELV) is NMP. AMP is bound by residues threonine 31, arginine 36, 57–59 (ELV), 85–88 (GYPR), and glutamine 92. Positions 126–136 (KRAAEQGRADD) are LID. Arginine 127 contacts ATP. Residues arginine 133 and arginine 144 each coordinate AMP. Glycine 172 contacts ATP.

This sequence belongs to the adenylate kinase family. As to quaternary structure, monomer.

The protein localises to the cytoplasm. The enzyme catalyses AMP + ATP = 2 ADP. Its pathway is purine metabolism; AMP biosynthesis via salvage pathway; AMP from ADP: step 1/1. In terms of biological role, catalyzes the reversible transfer of the terminal phosphate group between ATP and AMP. Plays an important role in cellular energy homeostasis and in adenine nucleotide metabolism. This is Adenylate kinase from Bifidobacterium longum (strain NCC 2705).